A 297-amino-acid polypeptide reads, in one-letter code: Band 7 protein AAEL010189 (297 aa).

The segment covering 1–13 (MGVVESITNSTKP) has biased composition (polar residues). Residues 1-30 (MGVVESITNSTKPGVTKKSSPEAEDDSNGE) are disordered. Residues 37–57 (ILIFLSWVLVVLTMPFSLLVC) form a helical membrane-spanning segment.

This sequence belongs to the band 7/mec-2 family.

It is found in the membrane. The sequence is that of Band 7 protein AAEL010189 from Aedes aegypti (Yellowfever mosquito).